The following is a 198-amino-acid chain: Nucleoid occlusion factor SlmA (198 aa).

The 62-residue stretch at 9–70 (RNRREEILQA…SLIEFIEDSL (62 aa)) folds into the HTH tetR-type domain. Positions 33–52 (TTAKLAANVGVSEAALYRHF) form a DNA-binding region, H-T-H motif. The stretch at 117–144 (EQDRLQGRINQLFERIEAQLRQVLKERK) forms a coiled coil.

The protein belongs to the nucleoid occlusion factor SlmA family. As to quaternary structure, homodimer. Interacts with FtsZ.

It is found in the cytoplasm. The protein resides in the nucleoid. In terms of biological role, required for nucleoid occlusion (NO) phenomenon, which prevents Z-ring formation and cell division over the nucleoid. Acts as a DNA-associated cell division inhibitor that binds simultaneously chromosomal DNA and FtsZ, and disrupts the assembly of FtsZ polymers. SlmA-DNA-binding sequences (SBS) are dispersed on non-Ter regions of the chromosome, preventing FtsZ polymerization at these regions. In Serratia proteamaculans (strain 568), this protein is Nucleoid occlusion factor SlmA.